Reading from the N-terminus, the 1136-residue chain is Rho GTPase-activating protein 45 (1136 aa).

2 disordered regions span residues 1–73 and 91–110; these read MFSR…RHAS and HRSPLTAASPGELPTEGAGP. Phosphoserine occurs at positions 23, 25, 73, 93, and 99. An F-BAR domain is found at 269–539; the sequence is EEVDVLLQRC…SSKLYDPGQQ (271 aa). Coiled coils occupy residues 376 to 412 and 440 to 499; these read EHEKRRKEIKEAWHRAQRKLQEAESNLRKAKQGYVQR and TATK…RQSD. Ser569, Ser578, Ser592, and Ser619 each carry phosphoserine. The disordered stretch occupies residues 583-662; the sequence is DVARPEAAGS…SSTEELVDPD (80 aa). Over residues 646-655 the composition is skewed to low complexity; it reads TSSSGTMSST. The Phorbol-ester/DAG-type zinc-finger motif lies at 702 to 747; that stretch reads THRLRKLRTPAKCRECNSYVYFQGAECEECCLACHKKCLETLAIQC. Residues 761–974 enclose the Rho-GAP domain; sequence QDFSHAARSA…TLIVHYGLVF (214 aa). Residues Ser949, Ser1027, Ser1030, and Ser1032 each carry the phosphoserine modification. Residues 1061 to 1136 are disordered; sequence EASLEVASGS…SCRERQPEFV (76 aa). Positions 1095–1109 are enriched in polar residues; sequence QQLSGFNTNQSNNVL.

In terms of assembly, HA-1 forms a complex with MHC class I HLA-A*0201. As to expression, expressed on cells of the hematopoietic lineage. Detected in dendritic cells and epidermal Langerhans cells. Expressed in peripheral blood mononuclear cells, in all leukemia/lymphoma cell lines. Detected also in some solid tumors and tissues such as cancerous and non-cancerous tissue.

It is found in the cytoplasm. The protein resides in the cell projection. The protein localises to the ruffle membrane. Its function is as follows. Contains a GTPase activator for the Rho-type GTPases (RhoGAP) domain that would be able to negatively regulate the actin cytoskeleton as well as cell spreading. However, also contains N-terminally a BAR-domin which is able to play an autoinhibitory effect on this RhoGAP activity. Functionally, precursor of the histocompatibility antigen HA-1. More generally, minor histocompatibility antigens (mHags) refer to immunogenic peptide which, when complexed with MHC, can generate an immune response after recognition by specific T-cells. The peptides are derived from polymorphic intracellular proteins, which are cleaved by normal pathways of antigen processing. The binding of these peptides to MHC class I or class II molecules and its expression on the cell surface can stimulate T-cell responses and thereby trigger graft rejection or graft-versus-host disease (GVHD) after hematopoietic stem cell transplantation from HLA-identical sibling donor. GVHD is a frequent complication after bone marrow transplantation (BMT), due to mismatch of minor histocompatibility antigen in HLA-matched sibling marrow transplants. Specifically, mismatching for mHag HA-1 which is recognized as immunodominant, is shown to be associated with the development of severe GVHD after HLA-identical BMT. HA-1 is presented to the cell surface by MHC class I HLA-A*0201, but also by other HLA-A alleles. This complex specifically elicits donor-cytotoxic T-lymphocyte (CTL) reactivity against hematologic malignancies after treatment by HLA-identical allogenic BMT. It induces cell recognition and lysis by CTL. The chain is Rho GTPase-activating protein 45 from Homo sapiens (Human).